The sequence spans 245 residues: TPR repeat-containing protein PA4299 (245 aa).

Positions 1 to 16 (MKALIGIGLCAALLGG) are cleaved as a signal peptide. Residue cysteine 17 is the site of N-palmitoyl cysteine attachment. Cysteine 17 carries S-diacylglycerol cysteine lipidation. TPR repeat units lie at residues 100 to 133 (PEAHHGLGLLALRNGDSARAVLELREAARLRPTE), 135 to 167 (RFRNDLGVALLKRGDRVGARFEFITALELQQGG), and 169 to 200 (LPATNLLGLLYLQGDREDAQRLIERLQLDARD). Positions 210-245 (SWGAVPTPGAAPASDDPLAELPAEANMHTAMANEAP) are disordered.

It localises to the cell membrane. This Pseudomonas aeruginosa (strain ATCC 15692 / DSM 22644 / CIP 104116 / JCM 14847 / LMG 12228 / 1C / PRS 101 / PAO1) protein is TPR repeat-containing protein PA4299.